Here is a 266-residue protein sequence, read N- to C-terminus: GTP cyclohydrolase III (266 aa).

Belongs to the archaeal-type GTP cyclohydrolase family.

It carries out the reaction GTP + 3 H2O = 2-amino-5-formylamino-6-(5-phospho-D-ribosylamino)pyrimidin-4(3H)-one + 2 phosphate + 2 H(+). In terms of biological role, catalyzes the formation of 2-amino-5-formylamino-6-ribofuranosylamino-4(3H)-pyrimidinone ribonucleotide monophosphate and inorganic phosphate from GTP. Also has an independent pyrophosphate phosphohydrolase activity. The sequence is that of GTP cyclohydrolase III from Methanococcus vannielii (strain ATCC 35089 / DSM 1224 / JCM 13029 / OCM 148 / SB).